We begin with the raw amino-acid sequence, 425 residues long: Histidine--tRNA ligase 2 (425 aa).

Belongs to the class-II aminoacyl-tRNA synthetase family. In terms of assembly, homodimer.

The protein localises to the cytoplasm. It catalyses the reaction tRNA(His) + L-histidine + ATP = L-histidyl-tRNA(His) + AMP + diphosphate + H(+). This chain is Histidine--tRNA ligase 2, found in Shouchella clausii (strain KSM-K16) (Alkalihalobacillus clausii).